Consider the following 457-residue polypeptide: Phosphomethylpyrimidine synthase (457 aa).

Substrate contacts are provided by residues Asn81, Met110, Tyr139, His175, 195 to 197 (SRG), 236 to 239 (DALR), and Glu275. Position 279 (His279) interacts with Zn(2+). Tyr302 lines the substrate pocket. His343 lines the Zn(2+) pocket. [4Fe-4S] cluster is bound by residues Cys423, Cys426, and Cys431.

The protein belongs to the ThiC family. [4Fe-4S] cluster is required as a cofactor.

The catalysed reaction is 5-amino-1-(5-phospho-beta-D-ribosyl)imidazole + S-adenosyl-L-methionine = 4-amino-2-methyl-5-(phosphooxymethyl)pyrimidine + CO + 5'-deoxyadenosine + formate + L-methionine + 3 H(+). The protein operates within cofactor biosynthesis; thiamine diphosphate biosynthesis. Functionally, catalyzes the synthesis of the hydroxymethylpyrimidine phosphate (HMP-P) moiety of thiamine from aminoimidazole ribotide (AIR) in a radical S-adenosyl-L-methionine (SAM)-dependent reaction. The sequence is that of Phosphomethylpyrimidine synthase from Aquifex aeolicus (strain VF5).